Reading from the N-terminus, the 285-residue chain is Bifunctional protein FolD (285 aa).

NADP(+) contacts are provided by residues 166-168 (GAS) and Ile-232.

Belongs to the tetrahydrofolate dehydrogenase/cyclohydrolase family. Homodimer.

It catalyses the reaction (6R)-5,10-methylene-5,6,7,8-tetrahydrofolate + NADP(+) = (6R)-5,10-methenyltetrahydrofolate + NADPH. It carries out the reaction (6R)-5,10-methenyltetrahydrofolate + H2O = (6R)-10-formyltetrahydrofolate + H(+). It participates in one-carbon metabolism; tetrahydrofolate interconversion. In terms of biological role, catalyzes the oxidation of 5,10-methylenetetrahydrofolate to 5,10-methenyltetrahydrofolate and then the hydrolysis of 5,10-methenyltetrahydrofolate to 10-formyltetrahydrofolate. In Vibrio vulnificus (strain CMCP6), this protein is Bifunctional protein FolD.